Consider the following 98-residue polypeptide: Conotoxin Di19A (98 aa).

The signal sequence occupies residues Met-1–Pro-19. Positions Ala-20–Arg-49 are excised as a propeptide. A 4-hydroxyproline modification is found at Pro-53. 4-carboxyglutamate is present on Glu-63. Pro-68, Pro-93, and Pro-97 each carry 4-hydroxyproline.

Post-translationally, contains 5 disulfide bonds. As to expression, expressed by the venom duct.

The protein resides in the secreted. Its function is as follows. Injection of the synthetic peptide causes a hyperexcitable phenotype in mice greater than three weeks of age at lower doses, and lethargy at higher doses. In Conus distans (Distant cone), this protein is Conotoxin Di19A.